A 621-amino-acid chain; its full sequence is Glutathione-regulated potassium-efflux system protein KefC (621 aa).

The next 12 helical transmembrane spans lie at 4 to 24 (HTLIQALIYLGAAALIVPVAV), 26 to 46 (LGLGSVLGYLIAGCIIGPWGF), 54 to 74 (SILHFAEIGVVLMLFVIGLEL), 90 to 110 (GALQMIACGALLGGFCILLGM), 114 to 134 (VAELIGMTLALSSTAIAMQAM), 151 to 171 (VLLFQDIAAIPLVAMIPLLAV), 178 to 198 (LGAFALSALKVAGALALVILL), 218 to 238 (VFSAVALFLVFGFGLLLEEAG), 270 to 290 (GLLLGLFFIGVGMSVDFGTLV), 294 to 314 (LRILILLVGFLVIKMGMLWLI), 327 to 347 (WFAVLLGQGSEFAFVVFGAAQ), and 359 to 379 (ALTLAVALSMAVTPILLVLLT). In terms of domain architecture, RCK N-terminal spans 399–518 (QPRVIIAGFG…AGVETPERET (120 aa)). The interval 591–621 (LSLTQRHGWQGTEEGKHTGDPRDEPESKPTV) is disordered. Over residues 603–621 (EEGKHTGDPRDEPESKPTV) the composition is skewed to basic and acidic residues.

The protein belongs to the monovalent cation:proton antiporter 2 (CPA2) transporter (TC 2.A.37) family. KefC subfamily. In terms of assembly, homodimer. Interacts with the regulatory subunit KefF.

It localises to the cell inner membrane. Functionally, pore-forming subunit of a potassium efflux system that confers protection against electrophiles. Catalyzes K(+)/H(+) antiport. In Enterobacter sp. (strain 638), this protein is Glutathione-regulated potassium-efflux system protein KefC.